The primary structure comprises 155 residues: Ribosomal RNA large subunit methyltransferase H (155 aa).

Residues Leu-72, Gly-103, and Leu-122–Leu-127 each bind S-adenosyl-L-methionine.

This sequence belongs to the RNA methyltransferase RlmH family. Homodimer.

It is found in the cytoplasm. The catalysed reaction is pseudouridine(1915) in 23S rRNA + S-adenosyl-L-methionine = N(3)-methylpseudouridine(1915) in 23S rRNA + S-adenosyl-L-homocysteine + H(+). Functionally, specifically methylates the pseudouridine at position 1915 (m3Psi1915) in 23S rRNA. This chain is Ribosomal RNA large subunit methyltransferase H, found in Haemophilus ducreyi (strain 35000HP / ATCC 700724).